Consider the following 127-residue polypeptide: Histone H2A (127 aa).

Residues 1–20 (MSGRGKGGKAKTGGKAKSRS) show a composition bias toward basic residues. The tract at residues 1 to 23 (MSGRGKGGKAKTGGKAKSRSSRA) is disordered. At S2 the chain carries N-acetylserine. S2 carries the phosphoserine modification. An N6-acetyllysine; partial mark is found at K6, K9, and K11. N5-methylglutamine is present on Q106. Residue K121 forms a Glycyl lysine isopeptide (Lys-Gly) (interchain with G-Cter in ubiquitin) linkage.

This sequence belongs to the histone H2A family. As to quaternary structure, the nucleosome is a histone octamer containing two molecules each of H2A, H2B, H3 and H4 assembled in one H3-H4 heterotetramer and two H2A-H2B heterodimers. The octamer wraps approximately 147 bp of DNA. Monoubiquitination of Lys-121 gives a specific tag for epigenetic transcriptional repression. Post-translationally, phosphorylation on Ser-2 is enhanced during mitosis. Phosphorylation on Ser-2 directly represses transcription.

The protein resides in the nucleus. The protein localises to the chromosome. Functionally, core component of nucleosome. Nucleosomes wrap and compact DNA into chromatin, limiting DNA accessibility to the cellular machineries which require DNA as a template. Histones thereby play a central role in transcription regulation, DNA repair, DNA replication and chromosomal stability. DNA accessibility is regulated via a complex set of post-translational modifications of histones, also called histone code, and nucleosome remodeling. In Caenorhabditis elegans, this protein is Histone H2A (his-3).